A 214-amino-acid polypeptide reads, in one-letter code: MADS-box protein SOC1 (214 aa).

The MADS-box domain maps to 3-57; that stretch reads RGKTQMKRIENATSRQVTFSKRRNGLLKKAFELSVLCDAEVSLIIFSPKGKLYEF. Residues 87-177 form the K-box domain; the sequence is MQHLKYEAAN…SEKWGSHESE (91 aa). The segment covering 162–177 has biased composition (basic and acidic residues); it reads AENEKLSEKWGSHESE. Residues 162 to 214 are disordered; that stretch reads AENEKLSEKWGSHESEVWSNKNQESTGRGDEESSPSSEVETQLFIGLPCSSRK. The segment covering 178–187 has biased composition (polar residues); it reads VWSNKNQEST.

Forms a heterodimer with AGL24 through MADS-box domain. Interacts with AGL15, AGL16 and AGL19. Interacts with OXS3 in the nucleus. Widely expressed. Not found in the apical meristem of short-day grown plants in vegetative stage.

Its subcellular location is the nucleus. It localises to the cytoplasm. Its function is as follows. Transcription activator active in flowering time control. May integrate signals from the photoperiod, vernalization and autonomous floral induction pathways. Can modulate class B and C homeotic genes expression. When associated with AGL24, mediates effect of gibberellins on flowering under short-day conditions, and regulates the expression of LEAFY (LFY), which links floral induction and floral development. The sequence is that of MADS-box protein SOC1 from Arabidopsis thaliana (Mouse-ear cress).